Consider the following 689-residue polypeptide: tRNA wybutosine-synthesizing protein 4 (689 aa).

Residues 1 to 33 (MTSTSKLDANQLARQRKKLEKDRRKKVYDDQQV) are disordered. The segment covering 14–26 (RQRKKLEKDRRKK) has biased composition (basic residues). Residues Arg-84, Gly-111, Asp-137, 183–184 (DL), and Glu-215 each bind S-adenosyl-L-methionine.

It belongs to the methyltransferase superfamily. LCMT family.

It catalyses the reaction 7-[(3S)-3-amino-3-carboxypropyl]wyosine(37) in tRNA(Phe) + S-adenosyl-L-methionine = 7-[(3S)-(3-amino-3-methoxycarbonyl)propyl]wyosine(37) in tRNA(Phe) + S-adenosyl-L-homocysteine. It carries out the reaction 7-[(3S)-(3-amino-3-methoxycarbonyl)propyl]wyosine(37) in tRNA(Phe) + S-adenosyl-L-methionine + CO2 = wybutosine(37) in tRNA(Phe) + S-adenosyl-L-homocysteine + 2 H(+). Its pathway is tRNA modification; wybutosine-tRNA(Phe) biosynthesis. Functionally, probable S-adenosyl-L-methionine-dependent methyltransferase that acts as a component of the wybutosine biosynthesis pathway. Wybutosine is a hyper modified guanosine with a tricyclic base found at the 3'-position adjacent to the anticodon of eukaryotic phenylalanine tRNA. May methylate the carboxyl group of leucine residues to form alpha-leucine ester residues. The protein is tRNA wybutosine-synthesizing protein 4 (PPM2) of Candida albicans (strain SC5314 / ATCC MYA-2876) (Yeast).